We begin with the raw amino-acid sequence, 126 residues long: MNQLAASVSVDVQTAYIETQSSPDEDKYLFSYTITISNLSNEAITLKSRHWCITDADGRKSEVHGTGVVGETPTIKPNSSYEYTSGTVLETPLGVMEGSYTMVDSDGNEFEAPISAFRLSIPGLLH.

One can recognise an ApaG domain in the interval 2 to 126; the sequence is NQLAASVSVD…FRLSIPGLLH (125 aa).

In Shewanella pealeana (strain ATCC 700345 / ANG-SQ1), this protein is Protein ApaG.